We begin with the raw amino-acid sequence, 437 residues long: Protein translocase subunit SecY (437 aa).

Helical transmembrane passes span 23–43 (IVFL…PIPG), 77–97 (IFAL…LLTL), 125–145 (LILA…IAGI), 154–174 (FYFY…LMWL), 183–203 (IGNG…PSAI), 217–237 (ILLF…VVFM), 271–291 (MAGV…ATII), 315–335 (YLIL…GLVF), 367–387 (IMLR…LIPE), and 395–415 (VPFY…IDFI).

This sequence belongs to the SecY/SEC61-alpha family. As to quaternary structure, component of the Sec protein translocase complex. Heterotrimer consisting of SecY, SecE and SecG subunits. The heterotrimers can form oligomers, although 1 heterotrimer is thought to be able to translocate proteins. Interacts with the ribosome. Interacts with SecDF, and other proteins may be involved. Interacts with SecA.

Its subcellular location is the cell membrane. Its function is as follows. The central subunit of the protein translocation channel SecYEG. Consists of two halves formed by TMs 1-5 and 6-10. These two domains form a lateral gate at the front which open onto the bilayer between TMs 2 and 7, and are clamped together by SecE at the back. The channel is closed by both a pore ring composed of hydrophobic SecY resides and a short helix (helix 2A) on the extracellular side of the membrane which forms a plug. The plug probably moves laterally to allow the channel to open. The ring and the pore may move independently. This is Protein translocase subunit SecY from Buchnera aphidicola subsp. Acyrthosiphon pisum (strain APS) (Acyrthosiphon pisum symbiotic bacterium).